We begin with the raw amino-acid sequence, 86 residues long: Small ribosomal subunit protein bS20 (86 aa).

The protein belongs to the bacterial ribosomal protein bS20 family.

Functionally, binds directly to 16S ribosomal RNA. The chain is Small ribosomal subunit protein bS20 from Oceanobacillus iheyensis (strain DSM 14371 / CIP 107618 / JCM 11309 / KCTC 3954 / HTE831).